Here is a 385-residue protein sequence, read N- to C-terminus: Probable caffeine synthase 3 (385 aa).

Tyrosine 18, cysteine 62, asparagine 67, aspartate 101, leucine 102, serine 140, and phenylalanine 141 together coordinate S-adenosyl-L-homocysteine. Residues tyrosine 158, glutamine 161, and phenylalanine 162 each contribute to the caffeine site. Asparagine 179 contacts Mg(2+). Threonine 238 lines the caffeine pocket. Positions 261, 263, and 264 each coordinate Mg(2+). Tyrosine 369 provides a ligand contact to caffeine.

The protein belongs to the methyltransferase superfamily. Type-7 methyltransferase family. The cofactor is Mg(2+). Expressed in roots, stems, young and old leaves.

It participates in alkaloid biosynthesis. Functionally, may be involved in the biosynthesis of caffeine. In Coffea arabica (Arabian coffee), this protein is Probable caffeine synthase 3.